A 227-amino-acid chain; its full sequence is Cytochrome c oxidase subunit 2 (227 aa).

At 1 to 14 (MAYPFQLGFQDATS) the chain is on the mitochondrial intermembrane side. A helical transmembrane segment spans residues 15–45 (PIMEELLHFHDHTLMIVFLISSLVLYIISLM). Over 46–59 (LTTKLTHTSTMDAQ) the chain is Mitochondrial matrix. Residues 60–87 (EVETIWTILPAIILILIALPSLRILYMM) form a helical membrane-spanning segment. The Mitochondrial intermembrane segment spans residues 88 to 227 (DEINNPSLTV…YFEKWSASML (140 aa)). His-161, Cys-196, Glu-198, Cys-200, His-204, and Met-207 together coordinate Cu cation. Residue Glu-198 coordinates Mg(2+). Tyr-218 is subject to Phosphotyrosine.

This sequence belongs to the cytochrome c oxidase subunit 2 family. In terms of assembly, component of the cytochrome c oxidase (complex IV, CIV), a multisubunit enzyme composed of 14 subunits. The complex is composed of a catalytic core of 3 subunits MT-CO1, MT-CO2 and MT-CO3, encoded in the mitochondrial DNA, and 11 supernumerary subunits COX4I, COX5A, COX5B, COX6A, COX6B, COX6C, COX7A, COX7B, COX7C, COX8 and NDUFA4, which are encoded in the nuclear genome. The complex exists as a monomer or a dimer and forms supercomplexes (SCs) in the inner mitochondrial membrane with NADH-ubiquinone oxidoreductase (complex I, CI) and ubiquinol-cytochrome c oxidoreductase (cytochrome b-c1 complex, complex III, CIII), resulting in different assemblies (supercomplex SCI(1)III(2)IV(1) and megacomplex MCI(2)III(2)IV(2)). Found in a complex with TMEM177, COA6, COX18, COX20, SCO1 and SCO2. Interacts with TMEM177 in a COX20-dependent manner. Interacts with COX20. Interacts with COX16. Requires Cu cation as cofactor.

It is found in the mitochondrion inner membrane. The enzyme catalyses 4 Fe(II)-[cytochrome c] + O2 + 8 H(+)(in) = 4 Fe(III)-[cytochrome c] + 2 H2O + 4 H(+)(out). Functionally, component of the cytochrome c oxidase, the last enzyme in the mitochondrial electron transport chain which drives oxidative phosphorylation. The respiratory chain contains 3 multisubunit complexes succinate dehydrogenase (complex II, CII), ubiquinol-cytochrome c oxidoreductase (cytochrome b-c1 complex, complex III, CIII) and cytochrome c oxidase (complex IV, CIV), that cooperate to transfer electrons derived from NADH and succinate to molecular oxygen, creating an electrochemical gradient over the inner membrane that drives transmembrane transport and the ATP synthase. Cytochrome c oxidase is the component of the respiratory chain that catalyzes the reduction of oxygen to water. Electrons originating from reduced cytochrome c in the intermembrane space (IMS) are transferred via the dinuclear copper A center (CU(A)) of subunit 2 and heme A of subunit 1 to the active site in subunit 1, a binuclear center (BNC) formed by heme A3 and copper B (CU(B)). The BNC reduces molecular oxygen to 2 water molecules using 4 electrons from cytochrome c in the IMS and 4 protons from the mitochondrial matrix. The sequence is that of Cytochrome c oxidase subunit 2 (MT-CO2) from Felis catus (Cat).